We begin with the raw amino-acid sequence, 542 residues long: Chaperonin GroEL (542 aa).

Residues 29–32, 86–90, Gly-413, and Asp-493 contribute to the ATP site; these read TLGP and DGTTT.

This sequence belongs to the chaperonin (HSP60) family. As to quaternary structure, forms a cylinder of 14 subunits composed of two heptameric rings stacked back-to-back. Interacts with the co-chaperonin GroES.

It is found in the cytoplasm. It catalyses the reaction ATP + H2O + a folded polypeptide = ADP + phosphate + an unfolded polypeptide.. Functionally, together with its co-chaperonin GroES, plays an essential role in assisting protein folding. The GroEL-GroES system forms a nano-cage that allows encapsulation of the non-native substrate proteins and provides a physical environment optimized to promote and accelerate protein folding. The protein is Chaperonin GroEL of Elusimicrobium minutum (strain Pei191).